The sequence spans 939 residues: Zinc finger RNA-binding protein 2 (939 aa).

Disordered stretches follow at residues 1–72 (MATS…AYGS), 116–185 (GRMT…IVTS), 217–264 (FYPP…PKAG), 289–314 (HLGG…SPRG), 360–389 (LEPA…ASSR), 401–449 (ALCE…DAQP), 545–590 (RLEE…SSDD), and 906–939 (RLGA…EGLV). Polar residues-rich tracts occupy residues 137-147 (PHGSHSHAQPP) and 157-184 (QPAS…SIVT). Residues 217 to 239 (FYPPAQPPPPPGPPQQLPPPPAP) show a composition bias toward pro residues. The stretch at 516 to 549 (KVLEERMRKQRHLAEERLEQLRRWHAERRRLEEE) forms a coiled coil. Residues 570–935 (RPESPASAPL…GEKKRGRRGG (366 aa)) form the DZF domain. Positions 906-916 (RLGARFRKRQR) are enriched in basic residues.

This is Zinc finger RNA-binding protein 2 (ZFR2) from Homo sapiens (Human).